The following is a 384-amino-acid chain: Trophoblast glycoprotein-like (384 aa).

An N-terminal signal peptide occupies residues 1 to 30; it reads MAPRAGQRGLWSPLPGLLLLAAALSRPAAP. 2 disulfide bridges follow: C31–C37 and C35–C47. The Extracellular segment spans residues 31-309; that stretch reads CPFQCYCFGS…DVAGPELEAS (279 aa). LRR repeat units follow at residues 61–84, 95–118, 119–142, 173–196, and 198–219; these read PPDARNLTIVGANLTVLRAAAFAG, LPLLTALRLTHNNIEVVEDGAFDG, LPSLAALDLSHNPLRALGYRAFRG, LAELRLLGLVGNALSRLPLAALRL, and RLEQLDARVNALAGLGPDELSA. N66 carries an N-linked (GlcNAc...) asparagine glycan. Intrachain disulfides connect C240/C266 and C242/C287. The helical transmembrane segment at 310–330 threads the bilayer; it reads YVFFGLVLALIGLIFLMVLYL. Residues 331–384 are Cytoplasmic-facing; the sequence is NRRGIQRWMHNLREACRDQMEGYHYRYEQDADPRRAPAPAAPAGSRATSPGSGL. The interval 361–384 is disordered; that stretch reads ADPRRAPAPAAPAGSRATSPGSGL. The segment covering 367–384 has biased composition (low complexity); sequence PAPAAPAGSRATSPGSGL.

The protein localises to the membrane. This Mus musculus (Mouse) protein is Trophoblast glycoprotein-like (Tpbgl).